We begin with the raw amino-acid sequence, 709 residues long: Polyribonucleotide nucleotidyltransferase (709 aa).

Mg(2+) contacts are provided by Asp-486 and Asp-492. The region spanning Pro-553–Ile-612 is the KH domain. Positions Gly-622–Lys-690 constitute an S1 motif domain.

It belongs to the polyribonucleotide nucleotidyltransferase family. Component of the RNA degradosome, which is a multiprotein complex involved in RNA processing and mRNA degradation. The cofactor is Mg(2+).

The protein localises to the cytoplasm. The enzyme catalyses RNA(n+1) + phosphate = RNA(n) + a ribonucleoside 5'-diphosphate. Involved in mRNA degradation. Catalyzes the phosphorolysis of single-stranded polyribonucleotides processively in the 3'- to 5'-direction. The sequence is that of Polyribonucleotide nucleotidyltransferase from Photorhabdus luminescens (Xenorhabdus luminescens).